The sequence spans 76 residues: Large ribosomal subunit protein eL29 (76 aa).

Over residues 1–29 (MAKSKNHTNHNQNKKAHRNGIKRPLRKRH) the composition is skewed to basic residues. Disordered regions lie at residues 1-33 (MAKS…ESTL) and 47-76 (RKGN…PVTL). Ser31 carries the phosphoserine modification. Over residues 51 to 62 (LSREESVKRYNE) the composition is skewed to basic and acidic residues.

Belongs to the eukaryotic ribosomal protein eL29 family.

This is Large ribosomal subunit protein eL29 (RpL29) from Drosophila melanogaster (Fruit fly).